Reading from the N-terminus, the 134-residue chain is 15.4 kDa class V heat shock protein (134 aa).

The region spanning 19–126 is the sHSP domain; sequence SLNNYQENHV…LIDPSDVPES (108 aa).

This sequence belongs to the small heat shock protein (HSP20) family. In terms of assembly, may form oligomeric structures.

It is found in the cytoplasm. The sequence is that of 15.4 kDa class V heat shock protein (HSP15.4) from Arabidopsis thaliana (Mouse-ear cress).